The chain runs to 235 residues: Small ribosomal subunit protein uS3 (235 aa).

A KH type-2 domain is found at 39–107 (IRTYIENELK…ETHLNIVEVR (69 aa)). The segment at 215–235 (SERRAVEGAGDGGGQRRRENA) is disordered.

Belongs to the universal ribosomal protein uS3 family. In terms of assembly, part of the 30S ribosomal subunit. Forms a tight complex with proteins S10 and S14.

Binds the lower part of the 30S subunit head. Binds mRNA in the 70S ribosome, positioning it for translation. This is Small ribosomal subunit protein uS3 from Chelativorans sp. (strain BNC1).